Consider the following 549-residue polypeptide: Cation/acetate symporter ActP (549 aa).

13 helical membrane passes run 33–53 (WQAIIMFLIFVLLTLYITYWA), 76–96 (GLAIAGDFMSAASFLGISALV), 103–123 (GLIYSLGFLVGWPIILFLIAE), 149–169 (LSACGSLVVVALYLIAQMVGA), 183–203 (IAVVLVGVLMVMYVLFGGMLA), 206–226 (WVQIIKAVLLLFGASFMAFMV), 262–282 (ISALSLGLGLMFGTAGLPHIL), 303–323 (GFMGYFYILTFIIGFGAIMLV), 355–375 (LFLGFISAVAFATILAVVAGL), 404–424 (VSKITVLILGVVAILLGILFE), 428–448 (IAFMVGLAFSIAASCNFPIIL), 463–483 (IGGWLGLLTAVILMVLGPTIW), and 493–513 (IFPYEYPALFSIAVAFIGIWF).

It belongs to the sodium:solute symporter (SSF) (TC 2.A.21) family.

Its subcellular location is the cell inner membrane. In terms of biological role, transports acetate. In Enterobacter sp. (strain 638), this protein is Cation/acetate symporter ActP.